The sequence spans 409 residues: MRVPININNALARVRDPLSIGGLKFPTTKEIQEAVAAIADKFNQENDLVDRFFPEDSTFASELELYLLRTQDAEQTGMTFVHQVGSTSLPVEARVAKVDLAKATWSPLAFKESRVWDEKEILYLGRLADEVQAGVINEQIAESLTWLMARMRNRRRWLTWQVMRTGRITIQPNDPYNPNGLKYVIDYGVTDIELPLPQKFDAKDGNGNSAVDPIQYFRDLIKAATYFPDRRPVAIIVGPGFDEVLADNTFVQKYVEYEKGWVVGQNTVQPPREVYRQAALDIFKRYTGLEVMVYDKTYRDQDGSVKYWIPVGELIVLNQSTGPVGRFVYTAHVAGQRNGKVVYATGPYLTVKDHLQDDPPYYAIIAGFHGLPQLSGYNTEDFSFHRFKWLKYANNVQSYLPPFPPKVEL.

The protein belongs to the lambda phage major capsid protein family. As to quaternary structure, homomultimer. Interacts with the portal protein. Interacts with the decoration protein.

The protein resides in the virion. Its subcellular location is the host cytoplasm. Assembles to form an icosahedric capsid shell with a T=7 symmetry although with a diameter of about 82 nm, which is a larger volume than the usual T=7 capsids. A dramatic reconfiguration of the capsid shell that expands the procaspid from a diameter of 66 nm to a supersized capsid of 82 nm, allows packaging of the large viral DNA genome. The capsid decoration protein binds the expanded capsid and stabilizes it. This is Major capsid protein from Thermus virus P23-45 (Thermus thermophilus phage P23-45).